We begin with the raw amino-acid sequence, 338 residues long: MHIAALHQPSQVQLNQDGNLKHFLTIEGLSKENLTKILDTAQSFLDDNNNLINRPLLEGRTVMNLFFENSTRTRTTFEAAAKRLSANVLNIDIARSSTSKGETLRDTLWNLEAMAADIFVVRHSSSGAAHFIAKDVCPKVAIINAGDGRHAHPTQAMLDMLTIRRETKKSFEDLSVAIIGDIKHSRVARSDVAALQTLGCKDIRVIAPNTLLPVGFSEYGDHVRLFNNMDEGITGCDVIIALRIQNERIDSPALSSQSEFYRMYGLNKERLSLAKPDCIVMHPGPMNRGVEIDSSIADGEQSVILKQVTNGIAVRMAVLALSMQGQLQEQGLIEAIAL.

Positions 72 and 73 each coordinate carbamoyl phosphate. K100 contacts L-aspartate. The carbamoyl phosphate site is built by R122, H152, and Q155. L-aspartate is bound by residues R186 and R243. Carbamoyl phosphate is bound by residues G284 and P285.

Belongs to the aspartate/ornithine carbamoyltransferase superfamily. ATCase family. As to quaternary structure, heterododecamer (2C3:3R2) of six catalytic PyrB chains organized as two trimers (C3), and six regulatory PyrI chains organized as three dimers (R2).

The catalysed reaction is carbamoyl phosphate + L-aspartate = N-carbamoyl-L-aspartate + phosphate + H(+). It functions in the pathway pyrimidine metabolism; UMP biosynthesis via de novo pathway; (S)-dihydroorotate from bicarbonate: step 2/3. Functionally, catalyzes the condensation of carbamoyl phosphate and aspartate to form carbamoyl aspartate and inorganic phosphate, the committed step in the de novo pyrimidine nucleotide biosynthesis pathway. The polypeptide is Aspartate carbamoyltransferase catalytic subunit (Acinetobacter baumannii (strain AB307-0294)).